Consider the following 182-residue polypeptide: Superoxide dismutase [Cu-Zn] (182 aa).

The first 19 residues, 1–19 (MFRTLTVVPLLALGLSLSA), serve as a signal peptide directing secretion. Cys20 carries N-palmitoyl cysteine lipidation. Cys20 carries S-diacylglycerol cysteine lipidation. Positions 69, 71, and 95 each coordinate Cu cation. Cys76 and Cys175 form a disulfide bridge. A disordered region spans residues 91 to 118 (AAGGHFDPGASHNHDGPHARNDQGHGGD). The Zn(2+) site is built by His95, His104, His115, and Asp118. Residues 102-115 (HNHDGPHARNDQGH) are compositionally biased toward basic and acidic residues.

The protein belongs to the Cu-Zn superoxide dismutase family. The cofactor is Cu cation. It depends on Zn(2+) as a cofactor.

Its subcellular location is the cell membrane. The enzyme catalyses 2 superoxide + 2 H(+) = H2O2 + O2. In terms of biological role, destroys radicals which are normally produced within the cells and which are toxic to biological systems. The polypeptide is Superoxide dismutase [Cu-Zn] (sodC) (Deinococcus radiodurans (strain ATCC 13939 / DSM 20539 / JCM 16871 / CCUG 27074 / LMG 4051 / NBRC 15346 / NCIMB 9279 / VKM B-1422 / R1)).